Here is a 686-residue protein sequence, read N- to C-terminus: MRNWEDPFTLACNTALKKNLPSCIFIIIFISVLCPVAMSQVVVPDSDADCLLRFKDTLANGSEFRSWDPLSSPCQGNTANWFGVLCSNYVWGLQLEGMGLTGKLNLDPLVPMKNLRTISFMNNNFNGPMPQVKRFTSLKSLYLSNNRFSGEIPADAFLGMPLLKKILLANNAFRGTIPSSLASLPMLLELRLNGNQFQGQIPSFQQKDLKLASFENNDLDGPIPESLRNMDPGSFAGNKGLCDAPLSPCSSSSPGVPVVPVSPVDPKSTSPPTGKKAGSFYTLAIILIVIGIILVIIALVFCFVQSRRRNFLSAYPSSAGKERIESYNYHQSTNKNNKPAESVNHTRRGSMPDPGGRLLFVRDDIQRFDLQDLLRASAEVLGSGTFGASYKAAISSGQTLVVKRYKHMNNVGRDEFHEHMRRLGRLNHPNILPLVAYYYRREEKLLVTEFMPNSSLASHLHANNSAGLDWITRLKIIKGVAKGLSYLFDELPTLTIPHGHMKSSNIVLDDSFEPLLTDYALRPMMSSEHAHNFMTAYKSPEYRPSKGQIITKKTDVWCFGVLILEVLTGRFPENYLTQGYDSNMSLVTWVNDMVKEKKTGDVFDKEMKGKKNCKAEMINLLKIGLRCCEEEEERRMDMREVVEMVEMLREGESEDDFGSMDHRGTHNNVYSSMLLDDDDFGFSMNR.

The first 39 residues, 1–39 (MRNWEDPFTLACNTALKKNLPSCIFIIIFISVLCPVAMS), serve as a signal peptide directing secretion. Residues 40–283 (QVVVPDSDAD…GKKAGSFYTL (244 aa)) are Extracellular-facing. Asn60 is a glycosylation site (N-linked (GlcNAc...) asparagine). LRR repeat units follow at residues 112–135 (MKNL…VKRF), 136–159 (TSLK…AFLG), 161–184 (PLLK…LASL), 185–208 (PMLL…QQKD), and 210–230 (KLAS…LRNM). A helical membrane pass occupies residues 284-304 (AIILIVIGIILVIIALVFCFV). Topologically, residues 305-686 (QSRRRNFLSA…DDDFGFSMNR (382 aa)) are cytoplasmic. The segment covering 328–339 (NYHQSTNKNNKP) has biased composition (polar residues). The interval 328–355 (NYHQSTNKNNKPAESVNHTRRGSMPDPG) is disordered. The region spanning 375–648 (RASAEVLGSG…REVVEMVEML (274 aa)) is the Protein kinase domain. Ser377 bears the Phosphoserine mark. ATP is bound by residues 381 to 389 (LGSGTFGAS) and Lys403. 2 positions are modified to phosphoserine: Ser455 and Ser458. A Phosphothreonine modification is found at Thr472. Position 542 is a phosphotyrosine (Tyr542). Ser545 bears the Phosphoserine mark.

Belongs to the protein kinase superfamily. Ser/Thr protein kinase family. In terms of assembly, interacts with the GRI peptide. As to expression, expressed in pollen and/or in flowers. Detected at low levels in leaves.

Its subcellular location is the cell membrane. It carries out the reaction L-seryl-[protein] + ATP = O-phospho-L-seryl-[protein] + ADP + H(+). The catalysed reaction is L-threonyl-[protein] + ATP = O-phospho-L-threonyl-[protein] + ADP + H(+). Its function is as follows. Receptor-like kinase involved in the control of pollen germination and pollen tube polar growth. The extracellular domain serves as a sensor for peptides derived from GRI. May act as a downstream element for ROS-dependent cell death induced by GRI. This chain is Pollen receptor-like kinase 5, found in Arabidopsis thaliana (Mouse-ear cress).